A 212-amino-acid polypeptide reads, in one-letter code: Translation initiation factor IF-3 (212 aa).

Positions 168 to 212 (MAPKAPASPKKDKADRPEGDAGDTDMAAPAPAPAAAPETESAPSA) are disordered. The span at 176 to 186 (PKKDKADRPEG) shows a compositional bias: basic and acidic residues. Residues 194–212 (AAPAPAPAAAPETESAPSA) are compositionally biased toward low complexity.

This sequence belongs to the IF-3 family. Monomer.

The protein localises to the cytoplasm. In terms of biological role, IF-3 binds to the 30S ribosomal subunit and shifts the equilibrium between 70S ribosomes and their 50S and 30S subunits in favor of the free subunits, thus enhancing the availability of 30S subunits on which protein synthesis initiation begins. The protein is Translation initiation factor IF-3 of Deinococcus radiodurans (strain ATCC 13939 / DSM 20539 / JCM 16871 / CCUG 27074 / LMG 4051 / NBRC 15346 / NCIMB 9279 / VKM B-1422 / R1).